A 244-amino-acid polypeptide reads, in one-letter code: tRNA (guanine-N(1)-)-methyltransferase (244 aa).

S-adenosyl-L-methionine contacts are provided by residues Gly112 and 132-137 (IGDYIL).

The protein belongs to the RNA methyltransferase TrmD family. As to quaternary structure, homodimer.

Its subcellular location is the cytoplasm. It carries out the reaction guanosine(37) in tRNA + S-adenosyl-L-methionine = N(1)-methylguanosine(37) in tRNA + S-adenosyl-L-homocysteine + H(+). In terms of biological role, specifically methylates guanosine-37 in various tRNAs. The sequence is that of tRNA (guanine-N(1)-)-methyltransferase from Geobacillus kaustophilus (strain HTA426).